We begin with the raw amino-acid sequence, 74 residues long: Defensin J1-2 (74 aa).

The N-terminal stretch at 1 to 27 (MAGFSKVIATIFLMMMLVFATGMVAEA) is a signal peptide. Disulfide bonds link Cys-30–Cys-74, Cys-41–Cys-61, Cys-47–Cys-68, and Cys-51–Cys-70.

The protein belongs to the DEFL family. As to quaternary structure, monomer. As to expression, expressed in flowers and in young fruits.

The protein resides in the secreted. Functionally, plant defense peptide with antifungal activity against F.oxysporum and B.cinerea. This is Defensin J1-2 from Capsicum annuum (Capsicum pepper).